We begin with the raw amino-acid sequence, 508 residues long: Histidine ammonia-lyase (508 aa).

Residues 143 to 145 (ASG) constitute a cross-link (5-imidazolinone (Ala-Gly)). The residue at position 144 (Ser-144) is a 2,3-didehydroalanine (Ser).

This sequence belongs to the PAL/histidase family. Contains an active site 4-methylidene-imidazol-5-one (MIO), which is formed autocatalytically by cyclization and dehydration of residues Ala-Ser-Gly.

It localises to the cytoplasm. It catalyses the reaction L-histidine = trans-urocanate + NH4(+). Its pathway is amino-acid degradation; L-histidine degradation into L-glutamate; N-formimidoyl-L-glutamate from L-histidine: step 1/3. The polypeptide is Histidine ammonia-lyase (Anaeromyxobacter sp. (strain K)).